The sequence spans 458 residues: Transcription factor verZ (458 aa).

A DNA-binding region (zn(2)-C6 fungal-type) is located at residues 117-144 (CDRCQAAKVKCGHEKPSCRRCTYHKVEC). Disordered regions lie at residues 153-256 (GRPR…MQSM) and 435-458 (MEEEDDPCSEIKLNPNRLRLEDGK). Polar residues-rich tracts occupy residues 167–186 (PSPQGSINGASDENSRSKSA), 193–207 (FTGTEPITEARQSPV), and 223–235 (RAEPWTPSLTTNF).

Its subcellular location is the nucleus. Functionally, transcription factor; part of the gene cluster that mediates the biosynthesis of 11'-deoxyverticillin A, one of the dimeric epipolythiodioxopiperazines (ETPs) from the verticillin family that act as mycotoxins. 11'-deoxyverticillin A is required for normal conidiation. Directly binds the consensus motif 5'-(T/C)(C/A)(G/T)GN3CC(G/T)(A/G)(G/C)-3' localized in the upstream regions of the verticillin biosynthetic genes. The chain is Transcription factor verZ from Clonostachys rogersoniana.